Here is a 305-residue protein sequence, read N- to C-terminus: Acetyl-coenzyme A carboxylase carboxyl transferase subunit beta (305 aa).

In terms of domain architecture, CoA carboxyltransferase N-terminal spans 27-296 (LWVKCSSCRE…SPAKAELAGR (270 aa)). Zn(2+) is bound by residues C31, C34, C50, and C53. The segment at 31–53 (CSSCRELIYKKQLNDNLKVCPKC) adopts a C4-type zinc-finger fold.

This sequence belongs to the AccD/PCCB family. Acetyl-CoA carboxylase is a heterohexamer composed of biotin carboxyl carrier protein (AccB), biotin carboxylase (AccC) and two subunits each of ACCase subunit alpha (AccA) and ACCase subunit beta (AccD). The cofactor is Zn(2+).

It localises to the cytoplasm. It catalyses the reaction N(6)-carboxybiotinyl-L-lysyl-[protein] + acetyl-CoA = N(6)-biotinyl-L-lysyl-[protein] + malonyl-CoA. Its pathway is lipid metabolism; malonyl-CoA biosynthesis; malonyl-CoA from acetyl-CoA: step 1/1. In terms of biological role, component of the acetyl coenzyme A carboxylase (ACC) complex. Biotin carboxylase (BC) catalyzes the carboxylation of biotin on its carrier protein (BCCP) and then the CO(2) group is transferred by the transcarboxylase to acetyl-CoA to form malonyl-CoA. The sequence is that of Acetyl-coenzyme A carboxylase carboxyl transferase subunit beta from Chloroflexus aurantiacus (strain ATCC 29366 / DSM 635 / J-10-fl).